The following is a 184-amino-acid chain: dCTP deaminase (184 aa).

K107–R112 provides a ligand contact to dCTP. E133 functions as the Proton donor/acceptor in the catalytic mechanism. 3 residues coordinate dCTP: Q152, Y166, and Q176.

Belongs to the dCTP deaminase family. In terms of assembly, homotrimer.

The catalysed reaction is dCTP + H2O + H(+) = dUTP + NH4(+). It functions in the pathway pyrimidine metabolism; dUMP biosynthesis; dUMP from dCTP (dUTP route): step 1/2. Functionally, catalyzes the deamination of dCTP to dUTP. The sequence is that of dCTP deaminase from Granulibacter bethesdensis (strain ATCC BAA-1260 / CGDNIH1).